The chain runs to 520 residues: Protein U4 (520 aa).

Belongs to the herpesviridae U4 family.

The polypeptide is Protein U4 (Elephantid herpesvirus 1 (isolate Asian elephant/Berlin/Kiba/1998) (EIHV-1)).